A 992-amino-acid chain; its full sequence is UPF0182 protein Mb3215c (992 aa).

Transmembrane regions (helical) follow at residues 17–39 (RILI…LIDA), 59–81 (LATR…FGGL), 113–135 (LVGI…SYWA), 169–191 (LMLS…AHYI), 212–229 (LVSL…AYWL), 255–277 (VLPA…FSAI), and 284–306 (IPAI…WPLI). Residues 906-938 (PTEAAVPPSPAANPPPPASGPQPPPVTAAPPVP) are disordered. The span at 912-938 (PPSPAANPPPPASGPQPPPVTAAPPVP) shows a compositional bias: pro residues.

It belongs to the UPF0182 family.

The protein localises to the cell membrane. This is UPF0182 protein Mb3215c from Mycobacterium bovis (strain ATCC BAA-935 / AF2122/97).